A 343-amino-acid chain; its full sequence is Cytoplasmic tRNA 2-thiolation protein 1 (343 aa).

The protein belongs to the TtcA family. CTU1/NCS6/ATPBD3 subfamily.

Its subcellular location is the cytoplasm. Its pathway is tRNA modification; 5-methoxycarbonylmethyl-2-thiouridine-tRNA biosynthesis. Functionally, plays a central role in 2-thiolation of mcm(5)S(2)U at tRNA wobble positions of tRNA(Lys), tRNA(Glu) and tRNA(Gln). Directly binds tRNAs and probably acts by catalyzing adenylation of tRNAs, an intermediate required for 2-thiolation. It is unclear whether it acts as a sulfurtransferase that transfers sulfur from thiocarboxylated URM1 onto the uridine of tRNAs at wobble position. The protein is Cytoplasmic tRNA 2-thiolation protein 1 of Drosophila erecta (Fruit fly).